Reading from the N-terminus, the 814-residue chain is Protein kinase C-binding protein NELL2 (814 aa).

The signal sequence occupies residues 1 to 19; sequence MEFILGIFCVLFCLRAGAG. Residues asparagine 51, asparagine 223, and asparagine 296 are each glycosylated (N-linked (GlcNAc...) asparagine). One can recognise a Laminin G-like domain in the interval 53 to 226; that stretch reads SKAFLFQDTS…SQCPDLNRTC (174 aa). Positions 270–329 constitute a VWFC 1 domain; that stretch reads RSCTVKGNIYRELESWMDGCKKCTCTNGTAQCETLTCSAPNCLSGFSPAYVPGKCCKECQ. The EGF-like 1 domain maps to 395 to 437; that stretch reads GHDFCSEGHNCMGYSICKNLDDKAVCICRDGFRALREDNAYCE. 3 disulfide bridges follow: cysteine 399–cysteine 411, cysteine 405–cysteine 420, and cysteine 422–cysteine 436. Ca(2+)-binding residues include aspartate 438, isoleucine 439, and glutamate 441. The region spanning 438-479 is the EGF-like 2; calcium-binding domain; that stretch reads DIDECTEGRHYCRENTVCVNTPGSFMCVCQTGYLKIDDYSCT. 9 disulfide bridges follow: cysteine 442–cysteine 455, cysteine 449–cysteine 464, cysteine 466–cysteine 478, cysteine 484–cysteine 497, cysteine 491–cysteine 506, cysteine 508–cysteine 519, cysteine 523–cysteine 533, cysteine 527–cysteine 539, and cysteine 541–cysteine 550. The Ca(2+) site is built by asparagine 457, threonine 458, and serine 461. In terms of domain architecture, EGF-like 3; calcium-binding spans 480–520; the sequence is EHNECATNQHSCDENAMCFNTVGGHNCVCQPGYTGNGTDCR. The N-linked (GlcNAc...) asparagine glycan is linked to asparagine 515. Residues 521-551 form the EGF-like 4 domain; sequence AFCKDGCRNGGTCIAPNICACPQGFTGPSCE. Ca(2+)-binding residues include aspartate 553, isoleucine 554, and glutamate 556. The EGF-like 5; calcium-binding domain occupies 553 to 599; the sequence is DIDECTEGFVQCDSRANCINLPGWYHCECRDGYHDNGMFSLGGESCE. Cystine bridges form between cysteine 557–cysteine 570, cysteine 564–cysteine 579, and cysteine 581–cysteine 598. 3 residues coordinate Ca(2+): asparagine 572, leucine 573, and tryptophan 576. The Ca(2+) site is built by aspartate 600, isoleucine 601, and glutamate 603. Positions 600 to 635 constitute an EGF-like 6; calcium-binding domain; that stretch reads DIDECATGRHSCSNDTVCFNLDGGFDCRCPHGKNCS. 3 cysteine pairs are disulfide-bonded: cysteine 604–cysteine 617, cysteine 611–cysteine 626, and cysteine 628–cysteine 634. An N-linked (GlcNAc...) asparagine glycan is attached at asparagine 613. Residues asparagine 619, leucine 620, and glycine 623 each contribute to the Ca(2+) site. Asparagine 633 carries N-linked (GlcNAc...) asparagine glycosylation. VWFC domains lie at 636–691 and 696–754; these read GDCT…PECD and SQCL…PRCV.

In terms of assembly, homotrimer.

The protein resides in the secreted. Functionally, may regulate neuronal differentiation, polarization and axon guidance. The protein is Protein kinase C-binding protein NELL2 (nell2.L) of Xenopus laevis (African clawed frog).